A 332-amino-acid polypeptide reads, in one-letter code: Heptahelical transmembrane protein 1 (332 aa).

The interval 1-52 (MDQNGHNDEAETVSCGNGNCKSKIVPGDDHGGDESSGTKRRKKRKTQQKTMK) is disordered. Over 1 to 98 (MDQNGHNDEA…VFSFHNESLN (98 aa)) the chain is Cytoplasmic. Basic and acidic residues predominate over residues 26-37 (PGDDHGGDESSG). Over residues 38-52 (TKRRKKRKTQQKTMK) the composition is skewed to basic residues. A helical membrane pass occupies residues 99-119 (VWTHLIGFIFFVALTVANIIH). Topologically, residues 120–138 (HDGFFPVDAKSPGNVTRWP) are extracellular. A helical transmembrane segment spans residues 139–159 (FFVFLGGSMFCLLASSICHLF). Residues 160 to 172 (CCHSKELNVFLLR) are Cytoplasmic-facing. The helical transmembrane segment at 173–193 (IDYAGITAMIITSFFPPIFYI) threads the bilayer. Topologically, residues 194-199 (FQCTPR) are extracellular. The helical transmembrane segment at 200–220 (WYFIYLAGITSMGIFTIITLF) threads the bilayer. Residues 221–233 (TPSLSAPKYRAFR) are Cytoplasmic-facing. The helical transmembrane segment at 234–254 (ALLFASMGLFGIVPAAHALVV) threads the bilayer. The Extracellular portion of the chain corresponds to 255–262 (NWGNPQRN). A helical membrane pass occupies residues 263-283 (VTLVYELLMAVFYLVGTGFYV). The Cytoplasmic portion of the chain corresponds to 284–303 (GRVPERLKPGWFDRVGHSHQ). The helical transmembrane segment at 304-324 (IFHVFVLLGALSHYAAALLFL) threads the bilayer. Residues 325–332 (DWRDHVGC) lie on the Extracellular side of the membrane.

Belongs to the ADIPOR family. Interacts (via N-terminus) with SCRM/ICE1. In terms of tissue distribution, expressed in roots, hypocotyls, vasculature of cotyledons and leaves, hydathodes and guard cells. In reproductive organs, expressed in trichomes, veins of sepals, stamens and stigmata of pistils.

The protein localises to the membrane. Functionally, may act as a negative regulator of abscisic acid (ABA)-mediated osmotic stress signaling and function in cross-talk between cold and osmotic signaling. The polypeptide is Heptahelical transmembrane protein 1 (HHP1) (Arabidopsis thaliana (Mouse-ear cress)).